Consider the following 620-residue polypeptide: UDP-glucose:protein N-beta-glucosyltransferase (620 aa).

This sequence belongs to the glycosyltransferase 41 family. It depends on Does not require a metal cofactor. as a cofactor.

It is found in the cytoplasm. It catalyses the reaction L-asparaginyl-[protein] + UDP-alpha-D-glucose = N(4)-(beta-D-glucosyl)-L-asparaginyl-[protein] + UDP + H(+). Its pathway is protein modification; protein glycosylation. Inverting glycosyltransferase that catalyzes the transfer of one glucose moiety from UDP-glucose to an asparagine residue in peptides and proteins containing the NX(S/T) motif, resulting in their modification with a beta-linked 1,N-glucose. Likely acts as a key component of a general protein glycosylation system. Also accepts UDP-galactose as a substrate donor, albeit with low efficiency. Cannot use UDP-GlcNAc or UDP-GalNAc as substrate donor. The protein is UDP-glucose:protein N-beta-glucosyltransferase of Actinobacillus pleuropneumoniae serotype 7 (strain AP76).